The sequence spans 217 residues: Ribonuclease T (217 aa).

The Exonuclease domain occupies valine 20–phenylalanine 195. Residues aspartate 23, glutamate 25, histidine 182, and aspartate 187 each contribute to the Mg(2+) site. The active-site Proton donor/acceptor is the histidine 182.

Belongs to the RNase T family. In terms of assembly, homodimer. Mg(2+) is required as a cofactor.

In terms of biological role, trims short 3' overhangs of a variety of RNA species, leaving a one or two nucleotide 3' overhang. Responsible for the end-turnover of tRNA: specifically removes the terminal AMP residue from uncharged tRNA (tRNA-C-C-A). Also appears to be involved in tRNA biosynthesis. The polypeptide is Ribonuclease T (Vibrio vulnificus (strain CMCP6)).